The primary structure comprises 103 residues: uncharacterized protein (103 aa).

The helical transmembrane segment at phenylalanine 37–isoleucine 57 threads the bilayer.

It is found in the membrane. This is an uncharacterized protein from Saccharomyces cerevisiae (strain ATCC 204508 / S288c) (Baker's yeast).